A 199-amino-acid chain; its full sequence is Interferon kappa (199 aa).

The signal sequence occupies residues 1–21; it reads MTPKFLWLVALVALYIPPIQS. Cystine bridges form between Cys24-Cys119 and Cys49-Cys162.

It belongs to the alpha/beta interferon family. As to expression, expressed at low levels in peritoneal macrophages.

It is found in the secreted. May play a role in the regulation of immune cell function. This Mus musculus (Mouse) protein is Interferon kappa (Ifnk).